Here is a 185-residue protein sequence, read N- to C-terminus: Prenylated Rab acceptor protein 1 (185 aa).

Over 1 to 78 the chain is Cytoplasmic; sequence MAAEKDQQKD…RNVEYYQSNY (78 aa). The tract at residues 30-54 is required for interaction with prenylated RAB3A and VAMP2; that stretch reads AGRERLERRRATIRPWSSFVDQRRF. The next 2 membrane-spanning stretches (helical) occupy residues 79–94 and 95–112; these read VFVFLGLILYCVVTSP and MLLVALAVFFGACYILYL. Residues 113-131 lie on the Cytoplasmic side of the membrane; that stretch reads RTLQSKFVLFGREVSPAHQ. The next 2 helical transmembrane spans lie at 132 to 148 and 149 to 165; these read YALAGGVSFPFFWLAGA and GSAVFWVLGATLVVIGS. The required for interaction with GDI1 stretch occupies residues 165–185; that stretch reads SHAAFHQMEAVDGEELQMEPV. Residues 166–185 lie on the Cytoplasmic side of the membrane; it reads HAAFHQMEAVDGEELQMEPV. Positions 175–185 are required for interaction with prenylated RAB3A and VAMP2; the sequence is VDGEELQMEPV. The homodimerization stretch occupies residues 175 to 185; it reads VDGEELQMEPV.

Belongs to the PRA1 family. In terms of assembly, homodimer. Interacts with VAMP2 (synaptobrevin-2), prenylated Rab proteins, GDI1, NDRG1 and PCLO.

The protein resides in the cell membrane. Its subcellular location is the cytoplasm. It is found in the golgi apparatus. It localises to the cytoplasmic vesicle. The protein localises to the secretory vesicle. The protein resides in the synaptic vesicle. Functionally, general Rab protein regulator required for vesicle formation from the Golgi complex. May control vesicle docking and fusion by mediating the action of Rab GTPases to the SNARE complexes. In addition it inhibits the removal of Rab GTPases from the membrane by GDI1. The sequence is that of Prenylated Rab acceptor protein 1 (RABAC1) from Canis lupus familiaris (Dog).